Reading from the N-terminus, the 562-residue chain is Arginine--tRNA ligase (562 aa).

The 'HIGH' region signature appears at 122–132 (PNIAKDMHVGH).

Belongs to the class-I aminoacyl-tRNA synthetase family. Monomer.

It localises to the cytoplasm. The catalysed reaction is tRNA(Arg) + L-arginine + ATP = L-arginyl-tRNA(Arg) + AMP + diphosphate. The sequence is that of Arginine--tRNA ligase from Chlamydia abortus (strain DSM 27085 / S26/3) (Chlamydophila abortus).